Here is a 486-residue protein sequence, read N- to C-terminus: CDT1-like protein b (486 aa).

Disordered stretches follow at residues 273 to 294 (PEGG…PSRS) and 348 to 371 (VKDD…ASDD). Over residues 281 to 294 (LRSTNSLARGPSRS) the composition is skewed to polar residues. The span at 348 to 363 (VKDDISNESGDEKSNY) shows a compositional bias: basic and acidic residues.

It belongs to the Cdt1 family. Expressed in proliferating (e.g. shoot and root apical meristems, organ primordia, guard cells and stomatal lineage) and endoreplicating cells (e.g. developing trichomes).

It localises to the nucleus. In terms of biological role, member of the pre-replication complex. Regulates endoreduplication. Involved in the coordination of cell and plastid division. This is CDT1-like protein b (CDT1B) from Arabidopsis thaliana (Mouse-ear cress).